We begin with the raw amino-acid sequence, 506 residues long: Tetratricopeptide repeat protein 8 (506 aa).

The interval 83–112 (RPGTSFARPKTSAKGVNPILRPTTNAGRPL) is disordered. TPR repeat units follow at residues 217–250 (YYWK…KKLI), 251–283 (ETFA…FPEN), 284–317 (VTML…ESNN), 319–351 (EAIA…GVSS), 353–385 (ELFL…MTDD), 388–421 (ADVW…DPDH), 423–455 (ESLV…NPYM), and 456–489 (FEGN…FPEH).

Part of BBSome complex, that contains at least bbs-1, bbs-2, bbs-4, bbs-5, osm-12, bbs-8/ttc-8 and bbs-9. As to expression, expressed in head and tail neurons. Expressed in ciliated male tail-neurons. Expressed in thermosensory and CO(2) sensory AFD neurons.

It is found in the cell projection. It localises to the cilium. The protein resides in the cytoplasm. Its subcellular location is the cytoskeleton. The protein localises to the cilium basal body. It is found in the cilium axoneme. Functionally, component of the BBSome complex. The BBSome complex is thought to function as a coat complex required for sorting of specific membrane proteins to the primary cilia. The BBSome complex is required for ciliogenesis but is dispensable for centriolar satellite function. Required for proper BBSome complex assembly and its ciliary localization. Required for cilia biogenesis and both the assembly and movement of intraflagellar transport proteins along the ciliary axoneme. Plays a role in guanylyl cyclase localization in the ring-like structures at the base of the finger compartment in AFD sensory neurons. This chain is Tetratricopeptide repeat protein 8, found in Caenorhabditis elegans.